Reading from the N-terminus, the 3020-residue chain is Protein furry homolog (3020 aa).

Tyrosine 213 is modified (phosphotyrosine). 3 disordered regions span residues 1378 to 1404, 1529 to 1554, and 1746 to 1773; these read GSSP…LKGN, ASGT…ESKI, and SSPV…GNLP. Residues serine 1382 and serine 1383 each carry the phosphoserine modification. The segment covering 1752-1772 has biased composition (low complexity); that stretch reads SGLNSSSTSSSISLGGSSGNL. 2 positions are modified to phosphoserine: serine 1936 and serine 1940. Low complexity predominate over residues 1937–1956; sequence RSSSPDLSSSSKLTASRKST. Disordered stretches follow at residues 1937–2042 and 2355–2384; these read RSSS…PSHV and LQNS…SNSN. A compositionally biased stretch (gly residues) spans 1966–1976; sequence PGSGGGGGGSG. Over residues 2016–2042 the composition is skewed to polar residues; that stretch reads ACTQQGLSSKTRSNSSLKESLTDPSHV. The segment covering 2369-2384 has biased composition (low complexity); it reads AVTRSASSTSSGSNSN. A phosphoserine mark is found at serine 2427 and serine 2428. Residues 2439 to 2458 are disordered; the sequence is TSLVSSEDGPREQENMDDTN. Phosphoserine is present on serine 2495. The segment at 2508–2535 is disordered; that stretch reads EERQLSRSTPSLNKMSHEDSDESSEEDL. Threonine 2516 bears the Phosphothreonine; by CDK1 mark. The span at 2526-2535 shows a compositional bias: acidic residues; sequence DSDESSEEDL. Serine 2815 bears the Phosphoserine mark.

Belongs to the furry protein family. In terms of assembly, when phosphorylated by CDK1, interacts with PLK1; this interaction occurs in mitotic cells, but not in interphase cells, and leads to further FRY phosphorylation by PLK1. In terms of processing, phosphorylated by AURKA, CDK1 and PLK1.

It localises to the cytoplasm. Its subcellular location is the cytoskeleton. The protein localises to the microtubule organizing center. It is found in the centrosome. The protein resides in the spindle pole. In terms of biological role, plays a crucial role in the structural integrity of mitotic centrosomes and in the maintenance of spindle bipolarity by promoting PLK1 activity at the spindle poles in early mitosis. May function as a scaffold promoting the interaction between AURKA and PLK1, thereby enhancing AURKA-mediated PLK1 phosphorylation. The sequence is that of Protein furry homolog (Fry) from Mus musculus (Mouse).